A 284-amino-acid chain; its full sequence is Bifunctional protein FolD (284 aa).

NADP(+) contacts are provided by residues 164 to 166 (GRS) and serine 189.

Belongs to the tetrahydrofolate dehydrogenase/cyclohydrolase family. Homodimer.

The catalysed reaction is (6R)-5,10-methylene-5,6,7,8-tetrahydrofolate + NADP(+) = (6R)-5,10-methenyltetrahydrofolate + NADPH. The enzyme catalyses (6R)-5,10-methenyltetrahydrofolate + H2O = (6R)-10-formyltetrahydrofolate + H(+). It participates in one-carbon metabolism; tetrahydrofolate interconversion. Catalyzes the oxidation of 5,10-methylenetetrahydrofolate to 5,10-methenyltetrahydrofolate and then the hydrolysis of 5,10-methenyltetrahydrofolate to 10-formyltetrahydrofolate. This chain is Bifunctional protein FolD, found in Listeria innocua serovar 6a (strain ATCC BAA-680 / CLIP 11262).